We begin with the raw amino-acid sequence, 343 residues long: Calcium/calmodulin-dependent protein kinase type 1B (343 aa).

Residues 15 to 270 (YEIREKLGSG…CQQALQHLWI (256 aa)) enclose the Protein kinase domain. Residues 21 to 29 (LGSGAFSEV) and Lys-44 each bind ATP. Asp-136 functions as the Proton acceptor in the catalytic mechanism. The tract at residues 290–311 (KNFARTHWKRAFNATSFLRHIR) is calmodulin-binding. Residues 314–343 (GQSPEGEEASRQGMTRHSHPGLGTSQSPKW) are disordered. Position 338 is a phosphoserine (Ser-338).

Belongs to the protein kinase superfamily. CAMK Ser/Thr protein kinase family. CaMK subfamily. In terms of processing, isoform 1 and isoform 2 are phosphorylated by CAMKK1. In terms of tissue distribution, isoform 1 is expressed in liver, heart, lung, kidney, spleen and testis. Isoform 2 is predominantly expressed in cerebrum and cerebellum.

Its subcellular location is the cytoplasm. It is found in the nucleus. It carries out the reaction L-seryl-[protein] + ATP = O-phospho-L-seryl-[protein] + ADP + H(+). The catalysed reaction is L-threonyl-[protein] + ATP = O-phospho-L-threonyl-[protein] + ADP + H(+). Its activity is regulated as follows. Activated by Ca(2+)/calmodulin. Must be phosphorylated to be maximally active. Activated by CAMKK1. Functionally, calcium/calmodulin-dependent protein kinase belonging to a proposed calcium-triggered signaling cascade. In vitro, isoform 1 and isoform 2 phosphorylate CREB1, SYN1/synapsin I. Phosphorylates and activates CAMK1. This chain is Calcium/calmodulin-dependent protein kinase type 1B (Pnck), found in Rattus norvegicus (Rat).